The chain runs to 319 residues: Acetyl-coenzyme A carboxylase carboxyl transferase subunit alpha (319 aa).

The CoA carboxyltransferase C-terminal domain maps to 32–293; the sequence is NVDAEVRALR…KAVLLNELDA (262 aa).

It belongs to the AccA family. As to quaternary structure, acetyl-CoA carboxylase is a heterohexamer composed of biotin carboxyl carrier protein (AccB), biotin carboxylase (AccC) and two subunits each of ACCase subunit alpha (AccA) and ACCase subunit beta (AccD).

It localises to the cytoplasm. It catalyses the reaction N(6)-carboxybiotinyl-L-lysyl-[protein] + acetyl-CoA = N(6)-biotinyl-L-lysyl-[protein] + malonyl-CoA. It participates in lipid metabolism; malonyl-CoA biosynthesis; malonyl-CoA from acetyl-CoA: step 1/1. Functionally, component of the acetyl coenzyme A carboxylase (ACC) complex. First, biotin carboxylase catalyzes the carboxylation of biotin on its carrier protein (BCCP) and then the CO(2) group is transferred by the carboxyltransferase to acetyl-CoA to form malonyl-CoA. The polypeptide is Acetyl-coenzyme A carboxylase carboxyl transferase subunit alpha (Xanthomonas campestris pv. campestris (strain B100)).